The following is a 757-amino-acid chain: Dynamin-related protein DNM1 (757 aa).

Residues 25 to 333 (TLDLPILAVV…LLSHIRDKLP (309 aa)) form the Dynamin-type G domain. The G1 motif stretch occupies residues 35 to 42 (GSQSSGKS). 35-42 (GSQSSGKS) contacts GTP. A G2 motif region spans residues 61-63 (VTR). A G3 motif region spans residues 175-178 (DLPG). Residues 175–179 (DLPGI) and 244–247 (TKLD) each bind GTP. The interval 244-247 (TKLD) is G4 motif. Positions 274–277 (VNRS) are G5 motif. The tract at residues 557-597 (SKLSQQENGQTNGINGTSSISSNIDQDSAKNSDYDDDGIDA) is disordered. Positions 567–580 (TNGINGTSSISSNI) are enriched in low complexity. The residue at position 629 (Ser629) is a Phosphoserine. The GED domain occupies 670-757 (CELIKRLIVS…KAATLISNIL (88 aa)).

Belongs to the TRAFAC class dynamin-like GTPase superfamily. Dynamin/Fzo/YdjA family. Interacts with FIS1 and MDV1.

It is found in the mitochondrion outer membrane. The catalysed reaction is GTP + H2O = GDP + phosphate + H(+). Functionally, microtubule-associated force-producing protein that participates mitochondrial fission. Fission of mitochondria occurs in many cell types and constitutes an important step in mitochondria morphology, which is balanced between fusion and fission. Functions antagonistically with FZO1. This chain is Dynamin-related protein DNM1 (DNM1), found in Saccharomyces cerevisiae (strain ATCC 204508 / S288c) (Baker's yeast).